A 491-amino-acid chain; its full sequence is Glutamate--tRNA ligase (491 aa).

Positions 10-20 match the 'HIGH' region motif; the sequence is PSPTGYLHIGG. The short motif at 243 to 247 is the 'KMSKS' region element; that stretch reads KISKR. Lysine 246 lines the ATP pocket.

Belongs to the class-I aminoacyl-tRNA synthetase family. Glutamate--tRNA ligase type 1 subfamily. As to quaternary structure, monomer.

It is found in the cytoplasm. The catalysed reaction is tRNA(Glu) + L-glutamate + ATP = L-glutamyl-tRNA(Glu) + AMP + diphosphate. Its function is as follows. Catalyzes the attachment of glutamate to tRNA(Glu) in a two-step reaction: glutamate is first activated by ATP to form Glu-AMP and then transferred to the acceptor end of tRNA(Glu). The chain is Glutamate--tRNA ligase from Desulfotalea psychrophila (strain LSv54 / DSM 12343).